The following is a 331-amino-acid chain: 2-hydroxyacid dehydrogenase homolog (331 aa).

Residues 154 to 155 (KI), 232 to 234 (TSR), and D258 each bind NAD(+). R234 is an active-site residue. E263 is an active-site residue. The Proton donor role is filled by H295. 295–298 (HQAF) is a binding site for NAD(+).

It belongs to the D-isomer specific 2-hydroxyacid dehydrogenase family.

In Haemophilus influenzae (strain ATCC 51907 / DSM 11121 / KW20 / Rd), this protein is 2-hydroxyacid dehydrogenase homolog (ddh).